Consider the following 97-residue polypeptide: Co-chaperonin GroES (97 aa).

Belongs to the GroES chaperonin family. As to quaternary structure, heptamer of 7 subunits arranged in a ring. Interacts with the chaperonin GroEL.

It localises to the cytoplasm. Together with the chaperonin GroEL, plays an essential role in assisting protein folding. The GroEL-GroES system forms a nano-cage that allows encapsulation of the non-native substrate proteins and provides a physical environment optimized to promote and accelerate protein folding. GroES binds to the apical surface of the GroEL ring, thereby capping the opening of the GroEL channel. The polypeptide is Co-chaperonin GroES (Pectobacterium carotovorum subsp. carotovorum (strain PC1)).